The following is a 208-amino-acid chain: GTP cyclohydrolase-2 (208 aa).

49-53 (RLHSE) contributes to the GTP binding site. Zn(2+) contacts are provided by Cys54, Cys65, and Cys67. Residues Gln70, 92–94 (EGR), and Thr114 contribute to the GTP site. Asp126 serves as the catalytic Proton acceptor. Arg128 (nucleophile) is an active-site residue. GTP contacts are provided by Thr149 and Lys154.

Belongs to the GTP cyclohydrolase II family. Zn(2+) is required as a cofactor.

The catalysed reaction is GTP + 4 H2O = 2,5-diamino-6-hydroxy-4-(5-phosphoribosylamino)-pyrimidine + formate + 2 phosphate + 3 H(+). The protein operates within cofactor biosynthesis; riboflavin biosynthesis; 5-amino-6-(D-ribitylamino)uracil from GTP: step 1/4. Its function is as follows. Catalyzes the conversion of GTP to 2,5-diamino-6-ribosylamino-4(3H)-pyrimidinone 5'-phosphate (DARP), formate and pyrophosphate. This chain is GTP cyclohydrolase-2, found in Azotobacter vinelandii (strain DJ / ATCC BAA-1303).